Consider the following 307-residue polypeptide: OTU domain-containing protein 2 (307 aa).

Disordered stretches follow at residues 23 to 46 (ENKD…RKEV) and 96 to 130 (SRDE…AKRD). The span at 103–114 (QNVPVQQQQQGQ) shows a compositional bias: low complexity. The 141-residue stretch at 167-307 (LKQFDIQPDG…GEHYNSLHDS (141 aa)) folds into the OTU domain.

The sequence is that of OTU domain-containing protein 2 (OTU2) from Saccharomyces cerevisiae (strain ATCC 204508 / S288c) (Baker's yeast).